A 715-amino-acid polypeptide reads, in one-letter code: ATP-dependent DNA helicase Hel308 (715 aa).

Residues 1–29 (MKVEELRIDERIKEVLKKRGISELYPPQA) carry the Q motif motif. ATP contacts are provided by residues Q28 and 46–53 (IPTASGKT). One can recognise a Helicase ATP-binding domain in the interval 33-197 (TSGILKGENA…WLNAKLIKSD (165 aa)). A DEAH box motif is present at residues 145–148 (DEIH). The Helicase C-terminal domain occupies 229–422 (LVYDAIKRSK…ILRGQILALI (194 aa)).

This sequence belongs to the helicase family. Hel308 subfamily. In terms of assembly, monomer.

It carries out the reaction Couples ATP hydrolysis with the unwinding of duplex DNA by translocating in the 3'-5' direction.. It catalyses the reaction ATP + H2O = ADP + phosphate + H(+). DNA-dependent ATPase and 3'-5' DNA helicase that may be involved in repair of stalled replication forks. This Pyrococcus horikoshii (strain ATCC 700860 / DSM 12428 / JCM 9974 / NBRC 100139 / OT-3) protein is ATP-dependent DNA helicase Hel308.